The primary structure comprises 846 residues: Outer membrane channel protein CpnT (846 aa).

The tract at residues 1-443 is NTD; the sequence is MAPLAVDPAA…AGVRGLKERL (443 aa). The interval 442-630 is disordered; that stretch reads RLEPTTPHLE…SGSEPPGLHA (189 aa). Pro residues-rich tracts occupy residues 450-466 and 475-504; these read LEPP…PPRI and APAP…PPVD. Low complexity-rich tracts occupy residues 508–517 and 562–586; these read EPVAPSSASA and APAT…HSTP. Residues 651 to 846 are TNT; the sequence is RLSDEAVDPQ…ELIRRGVLRQ (196 aa). The TNT domain maps to 751-846; that stretch reads YGPQLDRIGG…ELIRRGVLRQ (96 aa). Residue Arg757 is part of the active site. Arg780 is an NAD(+) binding site. Gln822 is a catalytic residue.

Interacts with the immunity factor for TNT (IFT) homolog. Post-translationally, the C-terminal domain (TNT) is probably cleaved.

Its subcellular location is the cell outer membrane. The protein localises to the secreted. It is found in the cell surface. It catalyses the reaction NAD(+) + H2O = ADP-D-ribose + nicotinamide + H(+). Glycohydrolase activity is completely inhibited by interaction with the immunity factor for TNT (IFT) homolog. This inhibition protects M.bovis from self-poisoning. The N-terminal domain (NTD) forms an outer membrane channel and is used for uptake of nutrients across the outer membrane. Also confers susceptibility to structurally different antibiotics and antituberculosis drugs, and to toxic immune factors such as nitric oxide (NO). The C-terminal domain (TNT) is dispensable for normal growth in macrophages. In Mycobacterium bovis (strain BCG / Pasteur 1173P2), this protein is Outer membrane channel protein CpnT.